The primary structure comprises 54 residues: Rubredoxin (54 aa).

The Rubredoxin-like domain maps to 1–54 (MKKYQCIVCGWIYDEAEGWPQDGIAPGTKWEDIPDDWTCPDCGVSKVDFEMIEV). Fe cation is bound by residues cysteine 6, cysteine 9, cysteine 39, and cysteine 42.

Belongs to the rubredoxin family. The cofactor is Fe(3+).

Its subcellular location is the cytoplasm. The protein operates within hydrocarbon metabolism; alkane degradation. Its function is as follows. Involved in the hydrocarbon hydroxylating system, which transfers electrons from NADH to rubredoxin reductase and then through rubredoxin to alkane 1 monooxygenase. This is Rubredoxin (rubA) from Acinetobacter baylyi (strain ATCC 33305 / BD413 / ADP1).